A 220-amino-acid chain; its full sequence is uncharacterized protein (220 aa).

This is an uncharacterized protein from Borreliella burgdorferi (strain ATCC 35210 / DSM 4680 / CIP 102532 / B31) (Borrelia burgdorferi).